Reading from the N-terminus, the 178-residue chain is Sec-independent protein translocase protein TatB (178 aa).

The chain crosses the membrane as a helical span at residues 1-21 (MFDIGWSELLVIGVVALIAIG). Residues 146–178 (LAIVREIKPEPQPQPADGAAPAEPERLKDAKAS) are disordered. Positions 168-178 (EPERLKDAKAS) are enriched in basic and acidic residues.

The protein belongs to the TatB family. The Tat system comprises two distinct complexes: a TatABC complex, containing multiple copies of TatA, TatB and TatC subunits, and a separate TatA complex, containing only TatA subunits. Substrates initially bind to the TatABC complex, which probably triggers association of the separate TatA complex to form the active translocon.

The protein resides in the cell inner membrane. Part of the twin-arginine translocation (Tat) system that transports large folded proteins containing a characteristic twin-arginine motif in their signal peptide across membranes. Together with TatC, TatB is part of a receptor directly interacting with Tat signal peptides. TatB may form an oligomeric binding site that transiently accommodates folded Tat precursor proteins before their translocation. The protein is Sec-independent protein translocase protein TatB of Bradyrhizobium sp. (strain ORS 278).